Here is a 170-residue protein sequence, read N- to C-terminus: Glycine cleavage system H protein, mitochondrial (170 aa).

The transit peptide at 1-47 directs the protein to the mitochondrion; that stretch reads MLRTTRLWTTRMPTVSKLFLRNSSGNALNKNKLPFLYSSQGPQAVRY. The region spanning 61–143 is the Lipoyl-binding domain; sequence TAFVGITKYA…MGDGWLVKMK (83 aa). Lys-102 is subject to N6-lipoyllysine.

It belongs to the GcvH family. In terms of assembly, component of the glycine decarboxylase complex (GDC), which is composed of four proteins: P, T, L and H. (R)-lipoate is required as a cofactor.

Its subcellular location is the mitochondrion. Its function is as follows. The glycine cleavage system (glycine decarboxylase complex) catalyzes the degradation of glycine. The H protein shuttles the methylamine group of glycine from the P protein to the T protein. The protein is Glycine cleavage system H protein, mitochondrial (GCV3) of Saccharomyces cerevisiae (strain ATCC 204508 / S288c) (Baker's yeast).